A 213-amino-acid polypeptide reads, in one-letter code: 3,4-dihydroxy-2-butanone 4-phosphate synthase (213 aa).

D-ribulose 5-phosphate contacts are provided by residues 37–38 (RE), aspartate 42, 150–154 (RPGHT), and glutamate 174. A Mg(2+)-binding site is contributed by glutamate 38. Residue histidine 153 participates in Mg(2+) binding.

The protein belongs to the DHBP synthase family. As to quaternary structure, homodimer. It depends on Mg(2+) as a cofactor. Mn(2+) serves as cofactor.

The enzyme catalyses D-ribulose 5-phosphate = (2S)-2-hydroxy-3-oxobutyl phosphate + formate + H(+). It participates in cofactor biosynthesis; riboflavin biosynthesis; 2-hydroxy-3-oxobutyl phosphate from D-ribulose 5-phosphate: step 1/1. Catalyzes the conversion of D-ribulose 5-phosphate to formate and 3,4-dihydroxy-2-butanone 4-phosphate. In Clostridium botulinum (strain Langeland / NCTC 10281 / Type F), this protein is 3,4-dihydroxy-2-butanone 4-phosphate synthase.